We begin with the raw amino-acid sequence, 225 residues long: uncharacterized protein (225 aa).

Residues 181 to 203 (INIFVVFMFIIYLLFYIISSTVF) traverse the membrane as a helical segment.

The protein localises to the cell membrane. This is an uncharacterized protein from Bacillus anthracis.